A 1943-amino-acid chain; its full sequence is Trichohyalin (1943 aa).

The interval 1–91 is S-100-like; it reads MSPLLRSICD…AQACYYALGQ (91 aa). 2 EF-hand domains span residues 23–48 and 49–84; these read CDGAALTKKDLKNLLEREFGAVLRRP and HDPKTVDLILELLDLDSNGRVDFNEFLLFIFKVAQA. 6 residues coordinate Ca(2+): D32, D62, D64, N66, R68, and E73. Disordered regions lie at residues 110-164, 186-209, and 222-274; these read LQDR…LEQR, RRAEEEQLQSCKGHETEEFPDEEQ, and GREE…LQEE. Basic and acidic residues predominate over residues 197–209; that stretch reads KGHETEEFPDEEQ. The 1-1; approximate repeat unit spans residues 314–326; that stretch reads RREQQEERREQQE. A 5 X 13 AA tandem repeats of R-R-E-Q-E-E-E-R-R-E-Q-Q-L region spans residues 314-377; that stretch reads RREQQEERRE…QEEERREQQL (64 aa). The stretch at 327 to 339 is one 1-2; approximate repeat; sequence RREQQEERREQQL. One copy of the 1-3; approximate repeat lies at 340-351; that stretch reads RREQEERREQQL. Tandem repeats lie at residues 352–364, 365–377, 378–383, 384–389, 390–395, 396–401, 402–407, 408–413, 414–419, and 420–425. An 8 X 6 AA tandem repeats of R-R-E-Q-Q-L region spans residues 378–425; sequence RREQQLRREQQLRREQQLRREQQLRREQQLRREQQLRREQQLRREQQL. A 9 X 28 AA approximate tandem repeats region spans residues 425 to 683; sequence LRREQEEERH…REHEEERREQ (259 aa). Disordered stretches follow at residues 426–485, 509–546, 608–819, and 837–872; these read RREQ…EERR, REQEERREQRLKRQEEEERLQQRLRSEQQLRREQEERR, ERLE…EKEQ, and EEQLQRRERAQQLQEEEDGLQEDQERRRSQEQRRDQ. 4 stretches are compositionally biased toward basic and acidic residues: residues 608 to 684, 724 to 781, 789 to 812, and 859 to 872; these read ERLE…REQE, RKQE…ERGR, PLREQRERQLRAEERQQREQRFLP, and DQERRRSQEQRRDQ. A run of 10 repeats spans residues 906-935, 936-965, 966-995, 996-1025, 1026-1055, 1056-1085, 1086-1115, 1116-1145, 1146-1175, and 1176-1204. The 10 X 30 AA tandem repeats stretch occupies residues 906 to 1204; the sequence is LQEEEEELQR…RERQYREEEE (299 aa). Positions 950–992 are enriched in basic and acidic residues; that stretch reads KRRRQERERQYRKDKKLQQKEEQLLGEEPEKRRRQEREKKYRE. Disordered stretches follow at residues 950 to 1000, 1046 to 1120, 1137 to 1162, 1193 to 1371, 1404 to 1435, 1492 to 1691, 1757 to 1820, 1834 to 1864, and 1876 to 1928; these read KRRR…QQEE, RERQ…QQEE, ERQYREEEEVQQEEEQLLREEPEKRR, QERE…RHQE, REQQLRQDRDRKFREEEQQLSRQERDRKFREE, QQLR…ERDR, PERE…RDGK, EQRLRQERDRQYRAEEQFATQEKSRREEQEL, and RERK…VRSS. Positions 1052 to 1064 are enriched in acidic residues; the sequence is EEEELQQEEEQLL. Composition is skewed to basic and acidic residues over residues 1065 to 1085 and 1092 to 1111; these read GEERETRRRQELERQYRKEEE and QLLREEPEKRRRQERERQCR. Residues 1142–1151 show a composition bias toward acidic residues; that stretch reads EEEEVQQEEE. Positions 1152 to 1162 are enriched in basic and acidic residues; that stretch reads QLLREEPEKRR. Basic and acidic residues-rich tracts occupy residues 1214–1263 and 1274–1371; these read YRDE…DRQS and QQER…RHQE. Residues 1292 to 1894 form a 23 X 26 AA approximate tandem repeats region; sequence HFPEEEQLER…IRRQQKEEQR (603 aa). 3 stretches are compositionally biased toward basic and acidic residues: residues 1492 to 1524, 1533 to 1673, and 1682 to 1691; these read QQLRRQERDRKFREQELRSQEPERKFLEEEQQL, FLQE…REEE, and QQLRRQERDR. Residues 1876–1912 show a composition bias toward basic and acidic residues; it reads RERKLREEHIRRQQKEEQRHRQVGEIKSQEGKGHGRL.

It belongs to the S100-fused protein family. Monomer. Post-translationally, substrate of transglutaminase. Some 200 arginines are probably converted to citrullines by peptidylarginine deimidase. In terms of tissue distribution, found in the hard keratinizing tissues such as the inner root sheath (IRS) of hair follicles and medulla, and in the filiform papillae of dorsal tongue epithelium.

In terms of biological role, intermediate filament-associated protein that associates in regular arrays with keratin intermediate filaments (KIF) of the inner root sheath cells of the hair follicle and the granular layer of the epidermis. It later becomes cross-linked to KIF by isodipeptide bonds. It may serve as scaffold protein, together with involucrin, in the organization of the cell envelope or even anchor the cell envelope to the KIF network. It may be involved in its own calcium-dependent postsynthetic processing during terminal differentiation. The sequence is that of Trichohyalin (TCHH) from Homo sapiens (Human).